Consider the following 177-residue polypeptide: UPF0340 protein STH78 (177 aa).

Belongs to the UPF0340 family.

The chain is UPF0340 protein STH78 from Symbiobacterium thermophilum (strain DSM 24528 / JCM 14929 / IAM 14863 / T).